A 365-amino-acid polypeptide reads, in one-letter code: Chorismate synthase (365 aa).

Residue Arg46 coordinates NADP(+). FMN-binding positions include 124–126 (RAS), Gly284, 299–303 (KPTPS), and Arg326.

This sequence belongs to the chorismate synthase family. FMNH2 serves as cofactor.

It carries out the reaction 5-O-(1-carboxyvinyl)-3-phosphoshikimate = chorismate + phosphate. It functions in the pathway metabolic intermediate biosynthesis; chorismate biosynthesis; chorismate from D-erythrose 4-phosphate and phosphoenolpyruvate: step 7/7. In terms of biological role, catalyzes the anti-1,4-elimination of the C-3 phosphate and the C-6 proR hydrogen from 5-enolpyruvylshikimate-3-phosphate (EPSP) to yield chorismate, which is the branch point compound that serves as the starting substrate for the three terminal pathways of aromatic amino acid biosynthesis. This reaction introduces a second double bond into the aromatic ring system. In Pyrobaculum neutrophilum (strain DSM 2338 / JCM 9278 / NBRC 100436 / V24Sta) (Thermoproteus neutrophilus), this protein is Chorismate synthase.